Consider the following 209-residue polypeptide: Ribosomal RNA large subunit methyltransferase E (209 aa).

5 residues coordinate S-adenosyl-L-methionine: Gly63, Trp65, Asp83, Asp99, and Asp124. Lys164 acts as the Proton acceptor in catalysis. One can recognise a TRAM domain in the interval 191 to 209; that stretch reads EASRGRSREVYIVATGYKG.

This sequence belongs to the class I-like SAM-binding methyltransferase superfamily. RNA methyltransferase RlmE family.

The protein localises to the cytoplasm. The enzyme catalyses uridine(2552) in 23S rRNA + S-adenosyl-L-methionine = 2'-O-methyluridine(2552) in 23S rRNA + S-adenosyl-L-homocysteine + H(+). Functionally, specifically methylates the uridine in position 2552 of 23S rRNA at the 2'-O position of the ribose in the fully assembled 50S ribosomal subunit. This chain is Ribosomal RNA large subunit methyltransferase E, found in Haemophilus influenzae (strain ATCC 51907 / DSM 11121 / KW20 / Rd).